Here is a 1001-residue protein sequence, read N- to C-terminus: ATP-dependent DNA/RNA helicase DHX36 (1001 aa).

The interval 1 to 44 (MSYDYHQSWSRDGGPRGSGQGSSGGGGGGSRGSGGGGGGRGGRG) is required for recruitment to cytoplasmic stress granules. A disordered region spans residues 1 to 54 (MSYDYHQSWSRDGGPRGSGQGSSGGGGGGSRGSGGGGGGRGGRGRHPAHLKGRE). A required for the pre-miR-134 transport region spans residues 1-97 (MSYDYHQSWS…IVQLLNSVQA (97 aa)). Positions 1 to 193 (MSYDYHQSWS…KKTDPRYIEM (193 aa)) are necessary for nuclear and nucleolar caps localizations. Gly residues predominate over residues 15–41 (PRGSGQGSSGGGGGGSRGSGGGGGGRG). Positions 46 to 68 (HPAHLKGREIGLWYAKKQTQKNK) are DSM (DHX36-specific motif). The segment at 46-98 (HPAHLKGREIGLWYAKKQTQKNKEAERQERAVVHMDERREEQIVQLLNSVQAK) is required for G4-DNA- and G4-RNA-binding. 2 recA-like domain regions span residues 99 to 379 (TDKD…MIHI) and 380 to 621 (PGFT…DYQL). Positions 120-147 (EVSSEKKINSEKKLDNQEKKLLNQEKKT) form a coiled coil. At Ser154 the chain carries Phosphoserine. Residues 210 to 380 (VNLINNHQVT…FGNCPMIHIP (171 aa)) enclose the Helicase ATP-binding domain. Residue 226-231 (GCGKTT) participates in ATP binding. The necessary for interaction with single-stranded DNA at the 3'-end of the G4-DNA structure stretch occupies residues 258–310 (RRISAISVAERVATERAESCGNGNSTGYQIRLQSRLPRKQGSILYCTTGIILQ). The short motif at 327–330 (DEIH) is the DEAH box element. Positions 328 and 330 each coordinate Mg(2+). One can recognise a Helicase C-terminal domain in the interval 470-640 (ALIRYIVLEE…ELCLQIKILR (171 aa)). Residues 491–550 (WDNISTLHDLLMSQVMFKSDKFLIIPLHSLMPTVNQTQVFKKTPPGVRKIVIATNIAETS) are necessary for interaction with single-stranded DNA at the 3'-end of the G4-DNA structure. The short motif at 510–521 (DKFLIIPLHSLM) is the Nuclear localization signal element. Residues Ser550 and 595-598 (RAGR) each bind ATP. Positions 622 to 691 (PEILRTPLEE…LGVHLARLPV (70 aa)) are WH domain. Necessary for interaction with single-stranded DNA at the 3'-end of the G4-DNA structure regions lie at residues 631–690 (ELCL…ARLP), 842–853 (NLGKKRKMVKVH), and 863–893 (HPKSVNVEQTDFHYNWLIYHLKMRTSSIYLY). The tract at residues 834–898 (PKVAKIRLNL…SIYLYDCTEV (65 aa)) is OB-fold-like subdomains. Lys940 carries the N6-acetyllysine modification. A Phosphoserine modification is found at Ser956.

Belongs to the DEAD box helicase family. DEAH subfamily. Found in a multi-helicase-TICAM1 complex at least composed of DHX36, DDX1, DDX21 and TICAM1; this complex exists in resting cells with or without dsRNA poly(I:C) ligand stimulation. Interacts (via C-terminus) with TICAM1 (via TIR domain). Interacts (via C-terminus) with DDX21; this interaction serves as bridges to TICAM1. Interacts with TERT; this interaction is dependent on the ability of DHX36 to bind to the G-quadruplex RNA (G4-RNA) structure present in the telomerase RNA template component (TERC). Interacts with DKC1; this interaction is dependent on the ability of DHX36 to bind to the G4-RNA structure present in TERC. Interacts with PARN; this interaction stimulates PARN to enhance uPA mRNA decay. Interacts with EXOSC3; this interaction occurs in a RNase-insensitive manner. Interacts with EXOSC10; this interaction occurs in a RNase-insensitive manner. Interacts with ILF3; this interaction occurs in a RNA-dependent manner. Interacts with ELAVL1; this interaction occurs in an RNA-dependent manner. Interacts with DDX5; this interaction occurs in a RNA-dependent manner. Interacts with DDX17; this interaction occurs in a RNA-dependent manner. Interacts with HDAC1; this interaction occurs in a RNA-dependent manner. Interacts with HDAC3; this interaction occurs in a RNA-dependent manner. Interacts with HDAC4. Interacts with AGO1. Interacts with AGO2. Interacts with ERCC6. Requires Mg(2+) as cofactor. Expressed in spermatogonia stem cells and primary spermatocytes (at protein level). Expressed strongly in testis. Weakly expressed in heart, lung, liver, kidney, small intestine, spleen, lymphe node and thymus.

The protein localises to the nucleus. It is found in the cytoplasm. It localises to the cytosol. The protein resides in the stress granule. Its subcellular location is the nucleus speckle. The protein localises to the chromosome. It is found in the telomere. It localises to the mitochondrion. The protein resides in the perikaryon. Its subcellular location is the cell projection. The protein localises to the dendrite. It is found in the axon. It carries out the reaction ATP + H2O = ADP + phosphate + H(+). ATPase activity is enhanced in the presence of homomeric poly(U) RNAs, but not by double-stranded DNA (dsDNA), double-stranded RNA (dsRNA) and tRNA. Functionally, multifunctional ATP-dependent helicase that unwinds G-quadruplex (G4) structures. Plays a role in many biological processes such as genomic integrity, gene expression regulations and as a sensor to initiate antiviral responses. G4 structures correspond to helical structures containing guanine tetrads. Binds with high affinity to and unwinds G4 structures that are formed in nucleic acids (G4-DNA and G4-RNA). Plays a role in genomic integrity. Converts the G4-RNA structure present in telomerase RNA template component (TREC) into a double-stranded RNA to promote P1 helix formation that acts as a template boundary ensuring accurate reverse transcription. Plays a role in transcriptional regulation. Resolves G4-DNA structures in promoters of genes, such as YY1, KIT/c-kit and ALPL and positively regulates their expression. Plays a role in post-transcriptional regulation. Unwinds a G4-RNA structure located in the 3'-UTR polyadenylation site of the pre-mRNA TP53 and stimulates TP53 pre-mRNA 3'-end processing in response to ultraviolet (UV)-induced DNA damage. Binds to the precursor-microRNA-134 (pre-miR-134) terminal loop and regulates its transport into the synapto-dendritic compartment. Involved in the pre-miR-134-dependent inhibition of target gene expression and the control of dendritic spine size. Plays a role in the regulation of cytoplasmic mRNA translation and mRNA stability. Binds to both G4-RNA structures and alternative non-quadruplex-forming sequence within the 3'-UTR of the PITX1 mRNA regulating negatively PITX1 protein expression. Binds to both G4-RNA structure in the 5'-UTR and AU-rich elements (AREs) localized in the 3'-UTR of NKX2-5 mRNA to either stimulate protein translation or induce mRNA decay in an ELAVL1-dependent manner, respectively. Also binds to ARE sequences present in several mRNAs mediating exosome-mediated 3'-5' mRNA degradation. Involved in cytoplasmic urokinase-type plasminogen activator (uPA) mRNA decay. Component of a multi-helicase-TICAM1 complex that acts as a cytoplasmic sensor of viral double-stranded RNA (dsRNA) and plays a role in the activation of a cascade of antiviral responses including the induction of pro-inflammatory cytokines via the adapter molecule TICAM1. Required for the early embryonic development and hematopoiesis. Involved in the regulation of cardioblast differentiation and proliferation during heart development. Involved in spermatogonia differentiation. May play a role in ossification. The sequence is that of ATP-dependent DNA/RNA helicase DHX36 from Mus musculus (Mouse).